Reading from the N-terminus, the 302-residue chain is Sulfate adenylyltransferase subunit 2 (302 aa).

Residues 280–302 are disordered; the sequence is RQGRAIDHDQSGSMELKKRQGYF.

This sequence belongs to the PAPS reductase family. CysD subfamily. In terms of assembly, heterodimer composed of CysD, the smaller subunit, and CysN.

It catalyses the reaction sulfate + ATP + H(+) = adenosine 5'-phosphosulfate + diphosphate. The protein operates within sulfur metabolism; hydrogen sulfide biosynthesis; sulfite from sulfate: step 1/3. In terms of biological role, with CysN forms the ATP sulfurylase (ATPS) that catalyzes the adenylation of sulfate producing adenosine 5'-phosphosulfate (APS) and diphosphate, the first enzymatic step in sulfur assimilation pathway. APS synthesis involves the formation of a high-energy phosphoric-sulfuric acid anhydride bond driven by GTP hydrolysis by CysN coupled to ATP hydrolysis by CysD. The protein is Sulfate adenylyltransferase subunit 2 of Vibrio cholerae serotype O1 (strain ATCC 39541 / Classical Ogawa 395 / O395).